We begin with the raw amino-acid sequence, 155 residues long: V-type proton ATPase 16 kDa proteolipid subunit c (155 aa).

Topologically, residues 1 to 10 (MSEAKNGPEY) are lumenal. Residues 11–33 (ASFFAVMGASAAMVFSALGAAYG) traverse the membrane as a helical segment. Residues 34–55 (TAKSGTGIAAMSVMRPEMIMKS) are Cytoplasmic-facing. A helical transmembrane segment spans residues 56–76 (IIPVVMAGIIAIYGLVVAVLI). Topologically, residues 77–92 (ANSLNDGISLYRSFLQ) are lumenal. Residues 93–114 (LGAGLSVGLSGLAAGFAIGIVG) traverse the membrane as a helical segment. Topologically, residues 115 to 131 (DAGVRGTAQQPRLFVGM) are cytoplasmic. Residues 132 to 152 (ILILIFAEVLGLYGLIVALIL) traverse the membrane as a helical segment. Topologically, residues 153–155 (STK) are lumenal.

Belongs to the V-ATPase proteolipid subunit family. V-ATPase is a heteromultimeric enzyme made up of two complexes: the ATP-hydrolytic V1 complex and the proton translocation V0 complex. The V1 complex consists of three catalytic AB heterodimers that form a heterohexamer, three peripheral stalks each consisting of EG heterodimers, one central rotor including subunits D and F, and the regulatory subunits C and H. The proton translocation complex V0 consists of the proton transport subunit a, a ring of proteolipid subunits c9c'', rotary subunit d, subunits e and f, and the accessory subunits ATP6AP1/Ac45 and ATP6AP2/PRR. Interacts with the V0 complex V-ATPase subunit a4 ATP6V0A4. Interacts with LASS2. Interacts with RNF182; this interaction leads to ubiquitination and degradation via the proteasome pathway. Ubiquitinated by RNF182, leading to its degradation via the ubiquitin-proteasome pathway. Expressed in brain (at protein level).

The protein resides in the cytoplasmic vesicle. Its subcellular location is the clathrin-coated vesicle membrane. The protein localises to the secretory vesicle. It localises to the synaptic vesicle membrane. In terms of biological role, proton-conducting pore forming subunit of the V0 complex of vacuolar(H+)-ATPase (V-ATPase), a multisubunit enzyme composed of a peripheral complex (V1) that hydrolyzes ATP and a membrane integral complex (V0) that translocates protons. V-ATPase is responsible for acidifying and maintaining the pH of intracellular compartments and in some cell types, is targeted to the plasma membrane, where it is responsible for acidifying the extracellular environment. This chain is V-type proton ATPase 16 kDa proteolipid subunit c (ATP6V0C), found in Bos taurus (Bovine).